The sequence spans 356 residues: Nicotinate-nucleotide--dimethylbenzimidazole phosphoribosyltransferase (356 aa).

Glu-317 (proton acceptor) is an active-site residue.

It belongs to the CobT family. In terms of assembly, homodimer.

The catalysed reaction is 5,6-dimethylbenzimidazole + nicotinate beta-D-ribonucleotide = alpha-ribazole 5'-phosphate + nicotinate + H(+). Its pathway is nucleoside biosynthesis; alpha-ribazole biosynthesis; alpha-ribazole from 5,6-dimethylbenzimidazole: step 1/2. Functionally, catalyzes the synthesis of alpha-ribazole-5'-phosphate from nicotinate mononucleotide (NAMN) and 5,6-dimethylbenzimidazole (DMB). This chain is Nicotinate-nucleotide--dimethylbenzimidazole phosphoribosyltransferase, found in Salmonella paratyphi A (strain AKU_12601).